Here is a 639-residue protein sequence, read N- to C-terminus: Sec1 family domain-containing protein 1 (639 aa).

Phosphoserine is present on residues Ser34, Ser300, and Ser525.

The protein belongs to the STXBP/unc-18/SEC1 family. Interacts with STX17. Interacts with STX5A. Interacts with the COG complex via COG4.

Its subcellular location is the cytoplasm. It is found in the endoplasmic reticulum membrane. The protein resides in the golgi apparatus. It localises to the golgi stack membrane. Functionally, plays a role in SNARE-pin assembly and Golgi-to-ER retrograde transport via its interaction with COG4. Involved in vesicular transport between the endoplasmic reticulum and the Golgi. The sequence is that of Sec1 family domain-containing protein 1 (Scfd1) from Mus musculus (Mouse).